The sequence spans 93 residues: Toxin RelE1 (93 aa).

This sequence belongs to the RelE toxin family.

Its function is as follows. Toxic component of a type II toxin-antitoxin (TA) system. Its toxic effect is neutralized by coexpression with cognate antitoxin RelB1 but no other ParD or RelB antitoxin. This Caulobacter vibrioides (strain ATCC 19089 / CIP 103742 / CB 15) (Caulobacter crescentus) protein is Toxin RelE1 (relE1).